The chain runs to 460 residues: Argininosuccinate lyase (460 aa).

Belongs to the lyase 1 family. Argininosuccinate lyase subfamily.

It localises to the cytoplasm. It catalyses the reaction 2-(N(omega)-L-arginino)succinate = fumarate + L-arginine. It participates in amino-acid biosynthesis; L-arginine biosynthesis; L-arginine from L-ornithine and carbamoyl phosphate: step 3/3. The protein is Argininosuccinate lyase of Solibacter usitatus (strain Ellin6076).